Here is a 395-residue protein sequence, read N- to C-terminus: NAC domain-containing protein 7 (395 aa).

Residues 7 to 156 (VPPGFRFHPT…GWVVCRVFKK (150 aa)) enclose the NAC domain. Residues 107–162 (IGMRKTLVFYKGRAPNGQKSDWIMHEYRLETDENGTPQEEGWVVCRVFKKRLAAVR) mediate DNA binding. 2 stretches are compositionally biased toward polar residues: residues 344-362 (AATASASIQNNAKDTSNAE) and 382-395 (TASTSSSCQIDLWK). The disordered stretch occupies residues 344–395 (AATASASIQNNAKDTSNAEYQVDEEKDPKRASDMGEEYTASTSSSCQIDLWK).

It belongs to the plant vascular related NAC-domain protein family. As to quaternary structure, interacts with NAC083/VNI2. Expressed in root, shoot and hypocotyl vascular elements, columella root caps, epidermal and cortex root cells and root-hypocotyl junctions. Observed predominantly in root imature xylem vessels. Present in root developing xylems. Specifically expressed in vessels in the secondary xylem of the root-hypocotyl region, and in vessels but not in interfascicular fibers in stems.

The protein resides in the nucleus. Functionally, transcription activator that binds to the secondary wall NAC binding element (SNBE), 5'-(T/A)NN(C/T)(T/C/G)TNNNNNNNA(A/C)GN(A/C/T)(A/T)-3', in the promoter of target genes. Involved in xylem formation by promoting the expression of secondary wall-associated transcription factors and of genes involved in secondary wall biosynthesis and programmed cell death, genes driven by the secondary wall NAC binding element (SNBE). Triggers thickening of secondary walls. The polypeptide is NAC domain-containing protein 7 (Arabidopsis thaliana (Mouse-ear cress)).